The following is a 132-amino-acid chain: MRKIISMLFIPLFIFAMAEPAGAPPEVKNIKILVLDRAGKKHELKSPLCEGLSYLKVKHGGIEYSVSLTSLEEIEVLSVSGDVAKIKLKYKNGKEEIFDISANTLCTGTSDFGNASFYLKDVQKILFRRGEK.

Residues 1 to 18 (MRKIISMLFIPLFIFAMA) form the signal peptide.

This is an uncharacterized protein from Aquifex aeolicus (strain VF5).